Here is a 74-residue protein sequence, read N- to C-terminus: UPF0346 protein BPUM_1890 (74 aa).

Belongs to the UPF0346 family.

The chain is UPF0346 protein BPUM_1890 from Bacillus pumilus (strain SAFR-032).